Here is a 191-residue protein sequence, read N- to C-terminus: GQGSLAYPGLRTQGNLETLGGPNDATRGLTSLADTFEHVIEELLDEQQVIQPSKENKDADLYSSRVMLSSQVPLEPPLLFLLEEYKNYLDAANMSMRVRRHSDPARRGELSVCDSTSEWVTAAEKKTAVDMSGATVTVLEKVPVPKGQLKQXFYETKCSSKGYAKEGCRGIDKRYWNSQCRTTQSYVRALT.

Residues 1 to 23 (GQGSLAYPGLRTQGNLETLGGPN) form a disordered region. Residues 1–100 (GQGSLAYPGL…AANMSMRVRR (100 aa)) constitute a propeptide that is removed on maturation. N-linked (GlcNAc...) asparagine glycosylation is present at Asn-93. A disulfide bond links Cys-113 and Cys-180.

This sequence belongs to the NGF-beta family.

The protein resides in the secreted. In terms of biological role, promotes the survival of neuronal populations that are all located either in the central nervous system or directly connected to it. The sequence is that of Neurotrophic factor BDNF precursor form (BDNF) from Anilius scytale (Coral cylinder snake).